The sequence spans 388 residues: Succinate--CoA ligase [ADP-forming] subunit beta (388 aa).

The 237-residue stretch at Lys-9–Lys-245 folds into the ATP-grasp domain. ATP is bound by residues Lys-46, Gly-53–Gly-55, Glu-100, Tyr-103, and Glu-108. Residues Asn-200 and Asp-214 each contribute to the Mg(2+) site. Residues Asn-265 and Gly-322–Val-324 each bind substrate.

It belongs to the succinate/malate CoA ligase beta subunit family. Heterotetramer of two alpha and two beta subunits. Mg(2+) serves as cofactor.

The catalysed reaction is succinate + ATP + CoA = succinyl-CoA + ADP + phosphate. The enzyme catalyses GTP + succinate + CoA = succinyl-CoA + GDP + phosphate. Its pathway is carbohydrate metabolism; tricarboxylic acid cycle; succinate from succinyl-CoA (ligase route): step 1/1. Succinyl-CoA synthetase functions in the citric acid cycle (TCA), coupling the hydrolysis of succinyl-CoA to the synthesis of either ATP or GTP and thus represents the only step of substrate-level phosphorylation in the TCA. The beta subunit provides nucleotide specificity of the enzyme and binds the substrate succinate, while the binding sites for coenzyme A and phosphate are found in the alpha subunit. In Psychrobacter cryohalolentis (strain ATCC BAA-1226 / DSM 17306 / VKM B-2378 / K5), this protein is Succinate--CoA ligase [ADP-forming] subunit beta.